A 148-amino-acid chain; its full sequence is Transcriptional regulator MraZ (148 aa).

SpoVT-AbrB domains follow at residues 5–53 (ETAI…AESE) and 82–125 (AAHL…SEQA).

The protein belongs to the MraZ family. In terms of assembly, forms oligomers.

The protein resides in the cytoplasm. The protein localises to the nucleoid. This Stenotrophomonas maltophilia (strain R551-3) protein is Transcriptional regulator MraZ.